Here is a 612-residue protein sequence, read N- to C-terminus: 1,8-cineole synthase, chloroplastic (612 aa).

Residues 1-52 (MALVCGAPLASRSCLNKSLISSTHELKPLRRTILPTLRWKSATPSINMCLTT) constitute a chloroplast transit peptide. Residues aspartate 363, aspartate 367, and aspartate 515 each contribute to the Mg(2+) site. The DDXXD motif signature appears at 363-367 (DDIYD).

It belongs to the terpene synthase family. Tpsd subfamily. Mg(2+) serves as cofactor. Mn(2+) is required as a cofactor.

It is found in the plastid. Its subcellular location is the chloroplast. The catalysed reaction is (2E)-geranyl diphosphate + H2O = 1,8-cineole + diphosphate. Its pathway is terpene metabolism; oleoresin biosynthesis. Functionally, terpene synthase (TPS) involved in the biosynthesis of monoterpene natural products included in conifer oleoresin secretions and volatile emissions; these compounds contribute to biotic and abiotic stress defense against herbivores and pathogens. Catalyzes the conversion of (2E)-geranyl diphosphate (GPP) to 1,8-cineole. This chain is 1,8-cineole synthase, chloroplastic, found in Picea glauca (White spruce).